A 303-amino-acid polypeptide reads, in one-letter code: Succinate--CoA ligase [ADP-forming] subunit alpha (303 aa).

CoA is bound by residues 20-23 (TGSE), lysine 46, and 108-110 (ITE). Tyrosine 173 serves as a coordination point for substrate. Histidine 259 (tele-phosphohistidine intermediate) is an active-site residue.

The protein belongs to the succinate/malate CoA ligase alpha subunit family. In terms of assembly, heterotetramer of two alpha and two beta subunits.

It catalyses the reaction succinate + ATP + CoA = succinyl-CoA + ADP + phosphate. The enzyme catalyses GTP + succinate + CoA = succinyl-CoA + GDP + phosphate. It participates in carbohydrate metabolism; tricarboxylic acid cycle; succinate from succinyl-CoA (ligase route): step 1/1. In terms of biological role, succinyl-CoA synthetase functions in the citric acid cycle (TCA), coupling the hydrolysis of succinyl-CoA to the synthesis of either ATP or GTP and thus represents the only step of substrate-level phosphorylation in the TCA. The alpha subunit of the enzyme binds the substrates coenzyme A and phosphate, while succinate binding and nucleotide specificity is provided by the beta subunit. This is Succinate--CoA ligase [ADP-forming] subunit alpha from Mycobacterium tuberculosis (strain CDC 1551 / Oshkosh).